We begin with the raw amino-acid sequence, 201 residues long: Glycine-rich protein 23 (201 aa).

A signal peptide spans 1-24 (MGLISGKVCVFIFVFALVAEFSFG). 21 tandem repeats follow at residues 62 to 67 (GLGGGG), 68 to 73 (GLGGGG), 74 to 79 (GLGGGG), 80 to 85 (GLGGGG), 86 to 91 (GLGGGG), 92 to 97 (GLGGGG), 98 to 103 (GLGGGS), 104 to 109 (GLGGGG), 110 to 115 (GLGGGS), 116 to 121 (GLGGGG), 122 to 129 (GLGGGGGG), 130 to 135 (GLGGGG), 136 to 143 (GLGGGAGG), 144 to 151 (GYGGGAGG), 152 to 157 (GLGGGG), 158 to 163 (GIGGGG), 164 to 169 (GFGGGG), 170 to 175 (GGGFGG), 176 to 182 (GAGGGFG), 184 to 189 (GIGGGG), and 190 to 194 (GLGGG). The 21 X 6 AA approximate tandem repeats of G-L-G-G-G-G, Gly-rich stretch occupies residues 62–194 (GLGGGGGLGG…IGGGGGLGGG (133 aa)).

This is Glycine-rich protein 23 from Arabidopsis thaliana (Mouse-ear cress).